Consider the following 1040-residue polypeptide: Beta-galactosidase (1040 aa).

2 residues coordinate substrate: N111 and D210. A Na(+)-binding site is contributed by D210. E427, H429, and E472 together coordinate Mg(2+). Substrate is bound by residues E472 and 548–551; that span reads EYAH. Residue E472 is the Proton donor of the active site. E548 serves as the catalytic Nucleophile. N608 is a binding site for Mg(2+). Na(+)-binding residues include F612 and D615. Substrate contacts are provided by D615 and W1016.

Belongs to the glycosyl hydrolase 2 family. In terms of assembly, homotetramer. Mg(2+) is required as a cofactor. Na(+) serves as cofactor.

The enzyme catalyses Hydrolysis of terminal non-reducing beta-D-galactose residues in beta-D-galactosides.. This is Beta-galactosidase from Pectobacterium atrosepticum (strain SCRI 1043 / ATCC BAA-672) (Erwinia carotovora subsp. atroseptica).